Consider the following 225-residue polypeptide: Insulin-induced gene 2 protein (225 aa).

Topologically, residues 1 to 28 (MAEGETESPGPKKCGPYISSVTSQSVNL) are cytoplasmic. A helical transmembrane segment spans residues 29-51 (MIRGVVLFFIGVFLALVLNLLQI). Residues 52 to 70 (QRNVTLFPPDVIASIFSSA) lie on the Lumenal side of the membrane. A helical transmembrane segment spans residues 71 to 88 (WWVPPCCGTASAVIGLLY). Residues 89–103 (PCIDRHLGEPHKFKR) lie on the Cytoplasmic side of the membrane. The helical transmembrane segment at 104–126 (EWSSVMRCVAVFVGINHASAKVD) threads the bilayer. Residues 127–129 (FDN) are Lumenal-facing. The helical transmembrane segment at 130–148 (NIQLSLTLAALSIGLWWTF) threads the bilayer. Topologically, residues 149–153 (DRSRS) are cytoplasmic. Serine 151 is modified (phosphoserine; by PCK1). Residues 154-175 (GFGLGVGIAFLATVVTQLLVYN) traverse the membrane as a helical segment. The Lumenal portion of the chain corresponds to 176–189 (GVYQYTSPDFLYVR). Residues 190 to 207 (SWLPCIFFAGGITMGNIG) traverse the membrane as a helical segment. At 208 to 225 (RQLAMYECKVIAEKSHQE) the chain is on the cytoplasmic side. A Cysteine sulfenic acid (-SOH); alternate modification is found at cysteine 215. Cysteine 215 is covalently cross-linked (Glycyl cysteine thioester (Cys-Gly) (interchain with G-Cter in ubiquitin); alternate). A KxHxx motif is present at residues 219–225 (AEKSHQE).

This sequence belongs to the INSIG family. In terms of assembly, interacts with SCAP; interaction is direct and only takes place in the presence of sterols; it prevents interaction between SCAP and the coat protein complex II (COPII). Associates with the SCAP-SREBP complex (composed of SCAP and SREBF1/SREBP1 or SREBF2/SREBP2); association is mediated via its interaction with SCAP and only takes place in the presence of sterols. Interacts with RNF139. Interacts with RNF145. In terms of processing, phosphorylation at Ser-151 by PCK1 reduces binding to oxysterol, disrupting the interaction between INSIG2 and SCAP, thereby promoting nuclear translocation of SREBP proteins (SREBF1/SREBP1 or SREBF2/SREBP2) and subsequent transcription of downstream lipogenesis-related genes. Post-translationally, polyubiquitinated by AMFR/gp78 at Cys-215 in some tissues such as adipose tissues, undifferentiated myoblasts and liver, leading to its degradation. In differentiated myotubes, Cys-215 oxidation prevents ubiquitination at the same site, resulting in protein stabilization. Oxidized at Cys-215 in differentiated myotubes, preventing ubiquitination at the same site, and resulting in protein stabilization.

It is found in the endoplasmic reticulum membrane. Oxysterol-binding protein that mediates feedback control of cholesterol synthesis by controlling both endoplasmic reticulum to Golgi transport of SCAP and degradation of HMGCR. Acts as a negative regulator of cholesterol biosynthesis by mediating the retention of the SCAP-SREBP complex in the endoplasmic reticulum, thereby blocking the processing of sterol regulatory element-binding proteins (SREBPs) SREBF1/SREBP1 and SREBF2/SREBP2. Binds oxysterol, including 22-hydroxycholesterol, 24-hydroxycholesterol, 25-hydroxycholesterol and 27-hydroxycholesterol, regulating interaction with SCAP and retention of the SCAP-SREBP complex in the endoplasmic reticulum. In presence of oxysterol, interacts with SCAP, retaining the SCAP-SREBP complex in the endoplasmic reticulum, thereby preventing SCAP from escorting SREBF1/SREBP1 and SREBF2/SREBP2 to the Golgi. Sterol deprivation or phosphorylation by PCK1 reduce oxysterol-binding, disrupting the interaction between INSIG2 and SCAP, thereby promoting Golgi transport of the SCAP-SREBP complex, followed by processing and nuclear translocation of SREBF1/SREBP1 and SREBF2/SREBP2. Also regulates cholesterol synthesis by regulating degradation of HMGCR: initiates the sterol-mediated ubiquitin-mediated endoplasmic reticulum-associated degradation (ERAD) of HMGCR via recruitment of the reductase to the ubiquitin ligase RNF139. The protein is Insulin-induced gene 2 protein of Homo sapiens (Human).